Consider the following 148-residue polypeptide: 3-dehydroquinate dehydratase (148 aa).

The active-site Proton acceptor is the Y23. N75, H81, and D88 together coordinate substrate. The Proton donor role is filled by H101. Residues 102-103 (LS) and R112 each bind substrate.

Belongs to the type-II 3-dehydroquinase family. As to quaternary structure, homododecamer.

The catalysed reaction is 3-dehydroquinate = 3-dehydroshikimate + H2O. It functions in the pathway metabolic intermediate biosynthesis; chorismate biosynthesis; chorismate from D-erythrose 4-phosphate and phosphoenolpyruvate: step 3/7. Catalyzes a trans-dehydration via an enolate intermediate. In Xanthomonas campestris pv. campestris (strain B100), this protein is 3-dehydroquinate dehydratase.